A 356-amino-acid chain; its full sequence is Alanine racemase (356 aa).

The active-site Proton acceptor; specific for D-alanine is the Lys34. Lys34 is modified (N6-(pyridoxal phosphate)lysine). Substrate is bound at residue Arg129. The Proton acceptor; specific for L-alanine role is filled by Tyr253. Met301 is a binding site for substrate.

This sequence belongs to the alanine racemase family. It depends on pyridoxal 5'-phosphate as a cofactor.

It catalyses the reaction L-alanine = D-alanine. Its pathway is amino-acid biosynthesis; D-alanine biosynthesis; D-alanine from L-alanine: step 1/1. In terms of biological role, catalyzes the interconversion of L-alanine and D-alanine. May also act on other amino acids. The chain is Alanine racemase (alr) from Nitrosococcus oceani (strain ATCC 19707 / BCRC 17464 / JCM 30415 / NCIMB 11848 / C-107).